A 436-amino-acid polypeptide reads, in one-letter code: GTPase Der (436 aa).

2 consecutive EngA-type G domains span residues 4–167 (PTVA…PVEE) and 175–351 (IRFS…ESQN). GTP-binding positions include 10–17 (GRPNVGKS), 57–61 (DTGGI), 119–122 (NKVD), 181–188 (GRPNVGKS), 229–233 (DTAGM), and 294–297 (NKWD). Residues 352-436 (KRIPSAVLND…PIHLIARKRK (85 aa)) form the KH-like domain.

It belongs to the TRAFAC class TrmE-Era-EngA-EngB-Septin-like GTPase superfamily. EngA (Der) GTPase family. As to quaternary structure, associates with the 50S ribosomal subunit.

In terms of biological role, GTPase that plays an essential role in the late steps of ribosome biogenesis. This Streptococcus pyogenes serotype M1 protein is GTPase Der.